The chain runs to 351 residues: Photosystem II D2 protein (351 aa).

A helical membrane pass occupies residues 39–59 (CAFLALGGWLTGTTFVTSWYT). H116 is a binding site for chlorophyll a. A helical transmembrane segment spans residues 123–139 (GFMLRQFEIARLVGIRP). Q128 and N141 together coordinate pheophytin a. Residues 151-164 (VFVSVFLMYPLGQS) form a helical membrane-spanning segment. Chlorophyll a is bound at residue H196. The chain crosses the membrane as a helical span at residues 206-226 (GALLCAIHGATVENTLFEDGE). Residues H213 and F260 each coordinate a plastoquinone. Residue H213 participates in Fe cation binding. Residue H267 participates in Fe cation binding. Residues 277–293 (GLWMSAVGIVGLALNLR) traverse the membrane as a helical segment.

Belongs to the reaction center PufL/M/PsbA/D family. As to quaternary structure, PSII is composed of 1 copy each of membrane proteins PsbA, PsbB, PsbC, PsbD, PsbE, PsbF, PsbH, PsbI, PsbJ, PsbK, PsbL, PsbM, PsbT, PsbX, PsbY, PsbZ, Psb30/Ycf12, peripheral proteins PsbO, CyanoQ (PsbQ), PsbU, PsbV and a large number of cofactors. It forms dimeric complexes. The D1/D2 heterodimer binds P680, chlorophylls that are the primary electron donor of PSII, and subsequent electron acceptors. It shares a non-heme iron and each subunit binds pheophytin, quinone, additional chlorophylls, carotenoids and lipids. There is also a Cl(-1) ion associated with D1 and D2, which is required for oxygen evolution. The PSII complex binds additional chlorophylls, carotenoids and specific lipids. serves as cofactor.

It is found in the cellular thylakoid membrane. The catalysed reaction is 2 a plastoquinone + 4 hnu + 2 H2O = 2 a plastoquinol + O2. Photosystem II (PSII) is a light-driven water:plastoquinone oxidoreductase that uses light energy to abstract electrons from H(2)O, generating O(2) and a proton gradient subsequently used for ATP formation. It consists of a core antenna complex that captures photons, and an electron transfer chain that converts photonic excitation into a charge separation. The D1/D2 (PsbA/PsbD) reaction center heterodimer binds P680, the primary electron donor of PSII as well as several subsequent electron acceptors. D2 is needed for assembly of a stable PSII complex. The protein is Photosystem II D2 protein of Nostoc sp. (strain PCC 7120 / SAG 25.82 / UTEX 2576).